The sequence spans 85 residues: MVKLSTIVVFCLTFFVSIYQNYISFFMPSNCRFYPTCSTYMILSLRKFGVIKGIILTILRLFKCHPLHQGGEDLVPLKIKDKSEY.

This sequence belongs to the UPF0161 family.

It is found in the cell membrane. Its function is as follows. Could be involved in insertion of integral membrane proteins into the membrane. This Buchnera aphidicola subsp. Schizaphis graminum (strain Sg) protein is Putative membrane protein insertion efficiency factor.